We begin with the raw amino-acid sequence, 398 residues long: CCA-adding enzyme (398 aa).

2 residues coordinate ATP: glycine 32 and arginine 35. The CTP site is built by glycine 32 and arginine 35. Positions 45 and 47 each coordinate Mg(2+). ATP-binding residues include arginine 119, aspartate 162, arginine 165, arginine 168, and arginine 171. CTP contacts are provided by arginine 119, aspartate 162, arginine 165, arginine 168, and arginine 171.

This sequence belongs to the tRNA nucleotidyltransferase/poly(A) polymerase family. Bacterial CCA-adding enzyme type 3 subfamily. In terms of assembly, homodimer. Requires Mg(2+) as cofactor.

The enzyme catalyses a tRNA precursor + 2 CTP + ATP = a tRNA with a 3' CCA end + 3 diphosphate. The catalysed reaction is a tRNA with a 3' CCA end + 2 CTP + ATP = a tRNA with a 3' CCACCA end + 3 diphosphate. In terms of biological role, catalyzes the addition and repair of the essential 3'-terminal CCA sequence in tRNAs without using a nucleic acid template. Adds these three nucleotides in the order of C, C, and A to the tRNA nucleotide-73, using CTP and ATP as substrates and producing inorganic pyrophosphate. tRNA 3'-terminal CCA addition is required both for tRNA processing and repair. Also involved in tRNA surveillance by mediating tandem CCA addition to generate a CCACCA at the 3' terminus of unstable tRNAs. While stable tRNAs receive only 3'-terminal CCA, unstable tRNAs are marked with CCACCA and rapidly degraded. The protein is CCA-adding enzyme of Lactococcus lactis subsp. lactis (strain IL1403) (Streptococcus lactis).